The sequence spans 448 residues: Rhodopsin (448 aa).

Topologically, residues 2–33 (GRDLRDNETWWYNPSIVVHPHWREFDQVPDAV) are extracellular. An N-linked (GlcNAc...) asparagine glycan is attached at Asn8. A helical membrane pass occupies residues 34–58 (YYSLGIFIGICGIIGCGGNGIVIYL). Residues 59–70 (FTKTKSLQTPAN) are Cytoplasmic-facing. A helical membrane pass occupies residues 71-97 (MFIINLAFSDFTFSLVNGFPLMTISCF). At 98–109 (LKKWIFGFAACK) the chain is on the extracellular side. A disulfide bridge links Cys108 with Cys186. Residues 110–131 (VYGFIGGIFGFMSIMTMAMISI) form a helical membrane-spanning segment. Topologically, residues 132 to 151 (DRYNVIGRPMAASKKMSHRR) are cytoplasmic. Residues 152 to 172 (AFIMIIFVWLWSVLWAIGPIF) traverse the membrane as a helical segment. The Extracellular portion of the chain corresponds to 173–199 (GWGAYTLEGVLCNCSFDYISRDSTTRS). Residues 200-224 (NILCMFILGFFGPILIIFFCYFNIV) form a helical membrane-spanning segment. Over 225-261 (MSVSNHEKEMAAMAKRLNAKELRKAQAGANAEMRLAK) the chain is Cytoplasmic. A helical transmembrane segment spans residues 262-283 (ISIVIVSQFLLSWSPYAVVALL). At 284–293 (AQFGPLEWVT) the chain is on the extracellular side. Residues 294 to 315 (PYAAQLPVMFAKASAIHNPMIY) form a helical membrane-spanning segment. At Lys305 the chain carries N6-(retinylidene)lysine. The Cytoplasmic segment spans residues 316-448 (SVSHPKFREA…QGVDNQAYQA (133 aa)). 2 S-palmitoyl cysteine lipidation sites follow: Cys336 and Cys337. Acidic residues predominate over residues 343-352 (ETEDDKDAET). Residues 343–448 (ETEDDKDAET…QGVDNQAYQA (106 aa)) are disordered. A compositionally biased stretch (low complexity) spans 359–391 (SSDAAPSADAAQMKEMMAMMQKMQQQQAAYPPQ). Positions 392-437 (GYAPPPQGYPPQGYPPQGYPPQGYPPQGYPPPPQGAPPQGAPPAAP) are enriched in pro residues.

It belongs to the G-protein coupled receptor 1 family. Opsin subfamily. Post-translationally, contains one covalently linked retinal chromophore. Upon light absorption, the covalently bound 11-cis-retinal is converted to all-trans-retinal. After hydrolysis of the Schiff base and release of the covalently bound all-trans-retinal, active rhodopsin is regenerated by binding of a fresh molecule of 11-cis-retinal. As to expression, retina, rhabdomere membrane of photoreceptor cells (at protein level).

It localises to the cell projection. Its subcellular location is the rhabdomere membrane. In terms of biological role, photoreceptor required for image-forming vision at low light intensity. Light-induced isomerization of 11-cis to all-trans retinal triggers a conformational change that activates signaling via G-proteins. Signaling mediates the activation of phospholipase C. Subsequent receptor phosphorylation mediates displacement of the bound G-protein alpha subunit by arrestin and terminates signaling. This chain is Rhodopsin (RHO), found in Todarodes pacificus (Japanese flying squid).